The primary structure comprises 27 residues: Defensin-like protein 2 (27 aa).

Residue Q1 is modified to Pyrrolidone carboxylic acid.

It belongs to the DEFL family. Forms oligomers in its native state.

Functionally, possesses some antifungal activity sensitive to inorganic cations and antibacterial activity against B.megaterium. The protein is Defensin-like protein 2 of Brassica campestris (Field mustard).